We begin with the raw amino-acid sequence, 430 residues long: MLPREIEELLNIILQHNTWRRKETINLIASENVMSPLAELVYVNDFAGRYAEGTVGNRYYQGTKYVDILEDSLSKRFAKVLDAKFVDVRPISGTIANLATYHALVPEGGIVASLPVKYGGHISHNTVGGLKALRVKTVELPWDFENFNIDIDAARKIIEEKRPNLIILGASLYLFPHPVREIANAAKAVGAYVLHDSAHVFGLIIGGVFPNPLKEGAHVITSSTHKTFPGPQGGLIASVTDEELNNAIQRAVFPVFTSNYHLHRYAATYVTLIEMEHFGAEYGARIVENAKALAEALAEEGVTPVGERLGYTKTHQVAVDVSKFGGGDKVARLLEEANIIVNKNALPWDKSVLKPSGIRMGVQEMTRFGMGKGEMKEIAKFIARVLKGEDPTAVKREVVEFRKTFIEIKYGFKIDKEIIDKIFYSLNLYT.

A (6S)-5,6,7,8-tetrahydrofolate-binding site is contributed by 120–122 (GHI). An N6-(pyridoxal phosphate)lysine modification is found at K226.

It belongs to the SHMT family. In terms of assembly, homodimer. It depends on pyridoxal 5'-phosphate as a cofactor.

The protein localises to the cytoplasm. Its pathway is amino-acid biosynthesis; glycine biosynthesis; glycine from L-serine: step 1/1. Its function is as follows. Catalyzes the reversible interconversion of serine and glycine with a modified folate serving as the one-carbon carrier. Also exhibits a pteridine-independent aldolase activity toward beta-hydroxyamino acids, producing glycine and aldehydes, via a retro-aldol mechanism. The polypeptide is Serine hydroxymethyltransferase (Pyrobaculum aerophilum (strain ATCC 51768 / DSM 7523 / JCM 9630 / CIP 104966 / NBRC 100827 / IM2)).